Consider the following 295-residue polypeptide: HTH-type transcriptional regulator TrpI (295 aa).

The region spanning 6–63 (PSLNALRAFEAAARLHSISLAAEELHVTHGAVSRQVRLLEDDLGVALFGKDGRGVKLT) is the HTH lysR-type domain. Residues 23–42 (ISLAAEELHVTHGAVSRQVR) constitute a DNA-binding region (H-T-H motif).

This sequence belongs to the LysR transcriptional regulatory family. In terms of assembly, homotetramer.

Activates the expression of the trpBA genes, which encode the two tryptophan synthase subunits, and represses initiation at its own promoter. Acts by binding to two adjacent sites in the intergenic region. In the absence of the inducer indoleglycerol phosphate (InGP), TrpI binds to site I. In the presence of InGP, TrpI binds to site I and site II. Binding to site II is site I dependent. InGP strongly stimulates binding to site II and is required for maximal activation of trpBA. The polypeptide is HTH-type transcriptional regulator TrpI (Pseudomonas aeruginosa (strain ATCC 15692 / DSM 22644 / CIP 104116 / JCM 14847 / LMG 12228 / 1C / PRS 101 / PAO1)).